The chain runs to 546 residues: MAAKEILFDSKAREKLKRGVDKLANAVKVTLGPKGRNVVIEKSFGSPIITKDGVTVAKEIELEDKFENMGAQMVKEVASKTSDIAGDGTTTATILAQAIFTEGVKLVAAGRNPMAIKRGIDKAVASVVAELETLAKPTRDQKEIAQVGTISANSDATIGNIIAEAMNKVGKEGVITVEEAKGMETTLDVVEGMQFDRGYLSPYFITDPERMVCELDEPLILINEKKITAMKDLLPVLEQVAKMSRPLLIVAEDIEGEALATLVVNKLRGTLQVCAVKAPGFGDRRKAMLEDIATLTGGQCVSEDLGIKLENMTLADLGKAKRVIVDKENSTIVDGAGDGDKIKARVKQIRAQIEETTSSYDKEKLQERLAKIVGGVAVINVGAATETEMKEKKARVEDALNATRAAVEEGIVPGGGVALVRCVKSLTGIKAVDDDEQSGIEIVRRAIEEPLRQISGNAGFEGSIVVAKVRDGKDGFGFNAATGEYEDLIKAGVIDPKKVTRIALQNSSSVAGLLLTTEAAIAEKPEPKKDMPPMPGGGMGGMGGMY.

Residues 30–33 (TLGP), Lys-51, 87–91 (DGTTT), Gly-415, 479–481 (NAA), and Asp-495 contribute to the ATP site. A disordered region spans residues 525-546 (PEPKKDMPPMPGGGMGGMGGMY). Residues 536-546 (GGGMGGMGGMY) are compositionally biased toward gly residues.

It belongs to the chaperonin (HSP60) family. In terms of assembly, forms a cylinder of 14 subunits composed of two heptameric rings stacked back-to-back. Interacts with the co-chaperonin GroES.

Its subcellular location is the cytoplasm. The enzyme catalyses ATP + H2O + a folded polypeptide = ADP + phosphate + an unfolded polypeptide.. Its function is as follows. Together with its co-chaperonin GroES, plays an essential role in assisting protein folding. The GroEL-GroES system forms a nano-cage that allows encapsulation of the non-native substrate proteins and provides a physical environment optimized to promote and accelerate protein folding. This Solidesulfovibrio magneticus (strain ATCC 700980 / DSM 13731 / RS-1) (Desulfovibrio magneticus) protein is Chaperonin GroEL.